The sequence spans 211 residues: Nucleoside triphosphate pyrophosphatase (211 aa).

Catalysis depends on Asp76, which acts as the Proton acceptor.

Belongs to the Maf family. Requires a divalent metal cation as cofactor.

It localises to the cytoplasm. The enzyme catalyses a ribonucleoside 5'-triphosphate + H2O = a ribonucleoside 5'-phosphate + diphosphate + H(+). The catalysed reaction is a 2'-deoxyribonucleoside 5'-triphosphate + H2O = a 2'-deoxyribonucleoside 5'-phosphate + diphosphate + H(+). Nucleoside triphosphate pyrophosphatase. May have a dual role in cell division arrest and in preventing the incorporation of modified nucleotides into cellular nucleic acids. This chain is Nucleoside triphosphate pyrophosphatase, found in Saccharopolyspora erythraea (strain ATCC 11635 / DSM 40517 / JCM 4748 / NBRC 13426 / NCIMB 8594 / NRRL 2338).